We begin with the raw amino-acid sequence, 242 residues long: Terpene cyclase dpfgB (242 aa).

7 consecutive transmembrane segments (helical) span residues D15 to G37, A51 to F71, L75 to V95, L112 to A132, A141 to C161, S169 to L189, and L205 to W225.

Belongs to the paxB family.

The protein localises to the membrane. Its pathway is secondary metabolite biosynthesis; terpenoid biosynthesis. In terms of biological role, terpene cyclase; part of the gene cluster that mediates the biosynthesis of diterpenoid pyrones. The first step of the pathway is the synthesis of the alpha-pyrone moiety by the polyketide synthase dpfgA via condensation of one acetyl-CoA starter unit with 3 malonyl-CoA units and 2 methylations. The alpha-pyrone is then combined with geranylgeranyl pyrophosphate (GGPP) formed by the GGPP synthase dpfgD through the action of the prenyltransferase dpfgC to yield a linear alpha-pyrone diterpenoid. Subsequent steps in the diterpenoid pyrone biosynthetic pathway involve the decalin core formation, which is initiated by the epoxidation of the C10-C11 olefin by the FAD-dependent oxidoreductase dpfgE, and is followed by a cyclization cascade catalyzed by the terpene cyclase dpfgB. The short chain dehydrogenase/reductase dpfgG then oxidizes the 8S hydroxy group to a ketone and the short chain dehydrogenase/reductase dpfgH reduces the ketone to the 8R hydroxy group to yield higginsianin B. Higginsianin B is further methylated by the methyltransferase dpfgI to produce the intermediate named FDDP B. The cytochrome P450 monooxygenase dfgpJ then catalyzes a three-step oxidation at C-27 to generate a carboxylic acid as well as C-26 hydroxylation. Finally, methyltransferase dpfgK methylates the carboxylic acid generated by dpfgJ, yielding the final diterpenoid pyrones from the pathway which were named FDDP D and FDDP E. In Gibberella zeae (strain ATCC MYA-4620 / CBS 123657 / FGSC 9075 / NRRL 31084 / PH-1) (Wheat head blight fungus), this protein is Terpene cyclase dpfgB.